Here is a 306-residue protein sequence, read N- to C-terminus: Large ribosomal subunit protein uL18 (306 aa).

The protein belongs to the universal ribosomal protein uL18 family. As to quaternary structure, component of the large ribosomal subunit (LSU).

It localises to the cytoplasm. It is found in the nucleus. In terms of biological role, component of the ribosome, a large ribonucleoprotein complex responsible for the synthesis of proteins in the cell. The small ribosomal subunit (SSU) binds messenger RNAs (mRNAs) and translates the encoded message by selecting cognate aminoacyl-transfer RNA (tRNA) molecules. The large subunit (LSU) contains the ribosomal catalytic site termed the peptidyl transferase center (PTC), which catalyzes the formation of peptide bonds, thereby polymerizing the amino acids delivered by tRNAs into a polypeptide chain. The nascent polypeptides leave the ribosome through a tunnel in the LSU and interact with protein factors that function in enzymatic processing, targeting, and the membrane insertion of nascent chains at the exit of the ribosomal tunnel. This Theileria annulata protein is Large ribosomal subunit protein uL18 (RPL5).